A 324-amino-acid chain; its full sequence is MGNLLKVLTCTDLEQGPNFFLDFENAQPTESEKEIYNQVNVVLKDAEGILEDLQSYRGAGHEIREAIQHPADEKLQEKAWGAVVPLVGKLKKFYEFSQRLEAALRGLLGALTSTPYSPTQHLEREQALAKQFAEILHFTLRFDELKMTNPAIQNDFSYYRRTLSRMRINNVPAEGENEVNNELANRMSLFYAEATPMLKTLSDATTKFVSENKNLPIENTTDCLSTMASVCRVMLETPEYRSRFTNEETVSFCLRVMVGVIILYDHVHPVGAFAKTSKIDMKGCIKVLKDQPPNSVEGLLNALRYTTKHLNDETTSKQIKSMLQ.

G2 is lipidated: N-myristoyl glycine. Residue K74 forms a Glycyl lysine isopeptide (Lys-Gly) (interchain with G-Cter in ubiquitin) linkage.

It belongs to the CYRI family. As to quaternary structure, interacts with RAC1 (GTP-bound form preferentially). In terms of processing, ubiquitinated at Lys-74 upon Salmonella bacterial infection.

It localises to the membrane. Its subcellular location is the mitochondrion. Its function is as follows. Negatively regulates RAC1 signaling and RAC1-driven cytoskeletal remodeling. Regulates chemotaxis, cell migration and epithelial polarization by controlling the polarity, plasticity, duration and extent of protrusions. Limits Rac1 mediated activation of the Scar/WAVE complex, focuses protrusion signals and regulates pseudopod complexity by inhibiting Scar/WAVE-induced actin polymerization. Protects against Salmonella bacterial infection. Attenuates processes such as macropinocytosis, phagocytosis and cell migration and restrict sopE-mediated bacterial entry. Also restricts infection mediated by Mycobacterium tuberculosis and Listeria monocytogenes. Involved in the regulation of mitochondrial dynamics and oxidative stress. This chain is CYFIP-related Rac1 interactor B, found in Homo sapiens (Human).